Here is a 280-residue protein sequence, read N- to C-terminus: Protein lyl-1 (280 aa).

The tract at residues 1–60 (MCPPQAQAEVGPTMTEKAEMVCAPSPAPAPPPKPASPGPPQVEEVGHRGGSSPPRLPPGV) is disordered. Residues 25 to 40 (SPAPAPPPKPASPGPP) show a composition bias toward pro residues. The bHLH domain occupies 150-202 (ARRVFTNSRERWRQQNVNGAFAELRKLLPTHPPDRKLSKNEVLRLAMKYIGFL). The tract at residues 214–280 (AAGPTPPGPR…EQTALSPEVR (67 aa)) is disordered. A compositionally biased stretch (basic and acidic residues) spans 229–245 (RVPDDGARRGSGRRAEA). A compositionally biased stretch (low complexity) spans 257 to 267 (PDGSPGGAARP). Phosphoserine is present on residues S260 and S276.

In terms of assembly, efficient DNA binding requires dimerization with another bHLH protein.

The protein resides in the nucleus. This chain is Protein lyl-1 (LYL1), found in Homo sapiens (Human).